A 194-amino-acid polypeptide reads, in one-letter code: Fe/S biogenesis protein NfuA (194 aa).

[4Fe-4S] cluster is bound by residues cysteine 151 and cysteine 154.

Belongs to the NfuA family. Homodimer. [4Fe-4S] cluster is required as a cofactor.

Involved in iron-sulfur cluster biogenesis. Binds a 4Fe-4S cluster, can transfer this cluster to apoproteins, and thereby intervenes in the maturation of Fe/S proteins. Could also act as a scaffold/chaperone for damaged Fe/S proteins. The sequence is that of Fe/S biogenesis protein NfuA from Mannheimia succiniciproducens (strain KCTC 0769BP / MBEL55E).